A 1059-amino-acid chain; its full sequence is MPKRTDIKKIMVIGSGPIIIGQAAEFDYAGTQACLALKEEGYSVVLVNSNPATIMTDKEIADKVYIEPITIEFVTRILRKERPDAILPTLGGQTGLNMAMELSRAGILDELGVELLGTKLSAIDQAEDRDLFKQLMEDLEQPIPESDIVNSVDEAVAFAAKIGYPVIVRPAFTLGGTGGGMCADEKELREIAENGLKLSPVTQCLIERSIAGFKEIEYEVMRDSADNALVVCNMENFDPVGIHTGDSIVFAPTQTLSDIENQMLRDASLKIIRALKIEGGCNVQLALDPHSFKYYVIEVNPRVSRSSALASKATGYPIAKLAAKIAVGLTLDEMINPVTGTTYAMFEPALDYVVAKIPRFPFDKFEHGERRLGTQMKATGEVMAIGRNIEESLLKACRSLEIGVYHNEMPELTNVSDDALVAKIVKAQDDRLFYLSEAIRRGYSIEELSDLTKIDLFFLDKLLHIFEIETELAAKVGDIAILKEAKHNGFADRKIADIWQMTADAVRKLRLDNKIIPVYKMVDTCAAEFESATPYFYSTYEWENESIKSEKESVIVLGSGPIRIGQGVEFDYATVHSVKAIQNAGYEAIIMNSNPETVSTDFSVSDKLYFEPLTFEDVMNVIELEQPKGVIVQFGGQTAINLAEPLSHAGVTILGTQVADLDRAEDRDLFEQALKDLNIPQPPGQTATNEEEAVASARKIGFPVLVRPSYVLGGRAMEIVESENDLRSYMRTAVKASPDHPVLVDSYLVGSECEVDAISDGKDVLIPGIMEHIERAGVHSGDSMAVYPPQTLSKEVQATIADYTKRLAIGLNCIGMMNIQFVIKDETVYVIEVNPRASRTVPFLSKVTDIPMAQIATKLILGSSLTELGYKDGLYPESQNVHVKAPVFSFTKLAKVDSLLGPEMKSTGEVMGTDSTLEKALYKAFEASYFHLPAFGNVIFTIADDTKEEALALARRFSNIGYSILATEGTAKFFAENNLEAVLVNKLGEDDDNDIPAYVRSGKVQAIINTVGNKRTFDEDGAAIRSSAIEHGVPLFTALDTADAMVRVLESRGFITQAI.

The tract at residues 1–401 is carboxyphosphate synthetic domain; sequence MPKRTDIKKI…SLLKACRSLE (401 aa). Arg-129, Arg-169, Gly-175, Gly-176, Arg-208, Ile-210, Glu-215, Gly-241, Ile-242, His-243, Gln-284, and Glu-298 together coordinate ATP. Residues 133–327 enclose the ATP-grasp 1 domain; that stretch reads KQLMEDLEQP…IAKLAAKIAV (195 aa). The Mg(2+) site is built by Gln-284, Glu-298, and Asn-300. Gln-284, Glu-298, and Asn-300 together coordinate Mn(2+). Residues 402 to 546 form an oligomerization domain region; the sequence is IGVYHNEMPE…YSTYEWENES (145 aa). A carbamoyl phosphate synthetic domain region spans residues 547–929; that stretch reads IKSEKESVIV…ALYKAFEASY (383 aa). Residues 671–861 enclose the ATP-grasp 2 domain; it reads EQALKDLNIP…MAQIATKLIL (191 aa). ATP is bound by residues Arg-707, Ser-746, Leu-748, Glu-752, Gly-777, Val-778, His-779, Ser-780, Gln-820, and Glu-832. Mg(2+)-binding residues include Gln-820, Glu-832, and Asn-834. Mn(2+)-binding residues include Gln-820, Glu-832, and Asn-834. An MGS-like domain is found at 930-1059; sequence FHLPAFGNVI…ESRGFITQAI (130 aa). Residues 930-1059 form an allosteric domain region; sequence FHLPAFGNVI…ESRGFITQAI (130 aa).

Belongs to the CarB family. In terms of assembly, composed of two chains; the small (or glutamine) chain promotes the hydrolysis of glutamine to ammonia, which is used by the large (or ammonia) chain to synthesize carbamoyl phosphate. Tetramer of heterodimers (alpha,beta)4. Requires Mg(2+) as cofactor. The cofactor is Mn(2+).

The catalysed reaction is hydrogencarbonate + L-glutamine + 2 ATP + H2O = carbamoyl phosphate + L-glutamate + 2 ADP + phosphate + 2 H(+). It catalyses the reaction hydrogencarbonate + NH4(+) + 2 ATP = carbamoyl phosphate + 2 ADP + phosphate + 2 H(+). It participates in amino-acid biosynthesis; L-arginine biosynthesis; carbamoyl phosphate from bicarbonate: step 1/1. The protein operates within pyrimidine metabolism; UMP biosynthesis via de novo pathway; (S)-dihydroorotate from bicarbonate: step 1/3. Large subunit of the glutamine-dependent carbamoyl phosphate synthetase (CPSase). CPSase catalyzes the formation of carbamoyl phosphate from the ammonia moiety of glutamine, carbonate, and phosphate donated by ATP, constituting the first step of 2 biosynthetic pathways, one leading to arginine and/or urea and the other to pyrimidine nucleotides. The large subunit (synthetase) binds the substrates ammonia (free or transferred from glutamine from the small subunit), hydrogencarbonate and ATP and carries out an ATP-coupled ligase reaction, activating hydrogencarbonate by forming carboxy phosphate which reacts with ammonia to form carbamoyl phosphate. This chain is Carbamoyl phosphate synthase large chain, found in Streptococcus mutans serotype c (strain ATCC 700610 / UA159).